The following is a 417-amino-acid chain: Type II methyltransferase M.KpnI (417 aa).

This sequence belongs to the N(4)/N(6)-methyltransferase family.

It carries out the reaction a 2'-deoxyadenosine in DNA + S-adenosyl-L-methionine = an N(6)-methyl-2'-deoxyadenosine in DNA + S-adenosyl-L-homocysteine + H(+). In terms of biological role, a beta subtype methylase, recognizes the double-stranded sequence 5'-GGTACC-3', methylates A-4 on both strands, and protects the DNA from cleavage by the KpnI endonuclease. This is Type II methyltransferase M.KpnI from Klebsiella pneumoniae.